Reading from the N-terminus, the 258-residue chain is Snake venom serine protease KN13 (258 aa).

The first 18 residues, 1 to 18, serve as a signal peptide directing secretion; sequence MVLIRVLANLLILQLSYA. Residues 19 to 24 constitute a propeptide that is removed on maturation; it reads QRSSEL. Residues 25-249 enclose the Peptidase S1 domain; that stretch reads VIGGDECNIN…HLDWIQNIIA (225 aa). 6 disulfide bridges follow: cysteine 31-cysteine 163, cysteine 50-cysteine 66, cysteine 98-cysteine 256, cysteine 142-cysteine 210, cysteine 174-cysteine 189, and cysteine 200-cysteine 225. Residue histidine 65 is the Charge relay system of the active site. N-linked (GlcNAc...) asparagine glycosylation is present at asparagine 103. Aspartate 110 (charge relay system) is an active-site residue. N-linked (GlcNAc...) asparagine glycans are attached at residues asparagine 121, asparagine 122, asparagine 154, and asparagine 170. Catalysis depends on serine 204, which acts as the Charge relay system. N-linked (GlcNAc...) asparagine glycosylation occurs at asparagine 251.

This sequence belongs to the peptidase S1 family. Snake venom subfamily. In terms of assembly, monomer. In terms of tissue distribution, expressed by the venom gland.

The protein localises to the secreted. Its function is as follows. Snake venom serine protease that may act in the hemostasis system of the prey. The protein is Snake venom serine protease KN13 of Trimeresurus stejnegeri (Chinese green tree viper).